Here is a 660-residue protein sequence, read N- to C-terminus: Probable alpha-galactosidase D (660 aa).

An N-terminal signal peptide occupies residues 1–20 (MLLHFILYAALSSVVTSVSL). 3 N-linked (GlcNAc...) asparagine glycosylation sites follow: Asn-47, Asn-91, and Asn-129. A disulfide bond links Cys-124 and Cys-157. Asp-155 serves as the catalytic Nucleophile. N-linked (GlcNAc...) asparagine glycosylation is found at Asn-182 and Asn-191. 200–204 (EWGIS) lines the substrate pocket. The active-site Proton donor is the Asp-222. Residues Asn-351, Asn-403, Asn-460, Asn-492, Asn-506, Asn-514, and Asn-584 are each glycosylated (N-linked (GlcNAc...) asparagine).

Belongs to the glycosyl hydrolase 27 family.

It is found in the secreted. It catalyses the reaction Hydrolysis of terminal, non-reducing alpha-D-galactose residues in alpha-D-galactosides, including galactose oligosaccharides, galactomannans and galactolipids.. Its function is as follows. Hydrolyzes a variety of simple alpha-D-galactoside as well as more complex molecules such as oligosaccharides and polysaccharides. This is Probable alpha-galactosidase D (aglD) from Aspergillus niger (strain ATCC MYA-4892 / CBS 513.88 / FGSC A1513).